We begin with the raw amino-acid sequence, 383 residues long: 8-amino-7-oxononanoate synthase (383 aa).

Arginine 21 serves as a coordination point for substrate. 108–109 lines the pyridoxal 5'-phosphate pocket; it reads GY. Histidine 133 lines the substrate pocket. Residues serine 179, histidine 207, and threonine 233 each contribute to the pyridoxal 5'-phosphate site. At lysine 236 the chain carries N6-(pyridoxal phosphate)lysine. Threonine 350 lines the substrate pocket.

It belongs to the class-II pyridoxal-phosphate-dependent aminotransferase family. BioF subfamily. Homodimer. Pyridoxal 5'-phosphate serves as cofactor.

The enzyme catalyses 6-carboxyhexanoyl-[ACP] + L-alanine + H(+) = (8S)-8-amino-7-oxononanoate + holo-[ACP] + CO2. Its pathway is cofactor biosynthesis; biotin biosynthesis. In terms of biological role, catalyzes the decarboxylative condensation of pimeloyl-[acyl-carrier protein] and L-alanine to produce 8-amino-7-oxononanoate (AON), [acyl-carrier protein], and carbon dioxide. In Serratia proteamaculans (strain 568), this protein is 8-amino-7-oxononanoate synthase.